The primary structure comprises 448 residues: Endoglucanase (448 aa).

Residues 1–34 (MFSKIKKINFFKKTFSFLIAVVMMLFTVLGTNTY) form the signal peptide. Substrate-binding positions include histidine 70, 74-75 (WY), tyrosine 101, and histidine 137. Glutamate 175 functions as the Proton donor in the catalytic mechanism. Tyrosine 237 contacts substrate. The active-site Nucleophile is the glutamate 263. Substrate is bound by residues 269-270 (AS), tryptophan 297, and 302-304 (KSE).

Belongs to the glycosyl hydrolase 5 (cellulase A) family.

The catalysed reaction is Endohydrolysis of (1-&gt;4)-beta-D-glucosidic linkages in cellulose, lichenin and cereal beta-D-glucans.. This chain is Endoglucanase (eglA), found in Clostridium saccharobutylicum.